Consider the following 116-residue polypeptide: Large ribosomal subunit protein bL19c (116 aa).

The protein belongs to the bacterial ribosomal protein bL19 family.

It localises to the plastid. Its subcellular location is the chloroplast. In Cyanidium caldarium (Red alga), this protein is Large ribosomal subunit protein bL19c.